Here is a 297-residue protein sequence, read N- to C-terminus: NADPH-dependent 1-acyldihydroxyacetone phosphate reductase (297 aa).

Residues 16–20 (GASGG) carry the GXSXG motif. The active-site Nucleophile; for lipase activity is Ser-18. Positions 21, 64, 93, 126, 157, 161, 190, and 192 each coordinate NADP(+). The active-site Proton acceptor is Tyr-157. Lys-161 (lowers pKa of active site Tyr) is an active-site residue.

This sequence belongs to the short-chain dehydrogenases/reductases (SDR) family.

It localises to the lipid droplet. Its subcellular location is the mitochondrion outer membrane. It is found in the endoplasmic reticulum. The catalysed reaction is a 1-acylglycerone 3-phosphate + NADPH + H(+) = a 1-acyl-sn-glycero-3-phosphate + NADP(+). It carries out the reaction 1-hexadecanoyl-sn-glycero-3-phosphate + NADP(+) = 1-hexadecanoylglycerone 3-phosphate + NADPH + H(+). It catalyses the reaction a triacylglycerol + H2O = a diacylglycerol + a fatty acid + H(+). The enzyme catalyses 1,2,3-tri-(9Z-octadecenoyl)-glycerol + H2O = di-(9Z)-octadecenoylglycerol + (9Z)-octadecenoate + H(+). With respect to regulation, inhibited by divalent cations and N-ethylmaleimide. Activity is reduced under anaerobic growth conditions. Can convert acyl and alkyl dihydroxyacetone-phosphate (DHAP) into glycerolipids and ether lipids, respectively. Required for the biosynthesis of phosphatidic acid via the DHAP pathway, where it reduces 1-acyl DHAP to lysophosphatidic acid (LPA). Also has triacylglycerol (TAG) lipase activity. Involved in the mobilization of the non-polar storage lipids triacylglycerols (TAGs) from lipid particles by hydrolysis of TAGs. Required for spore germination. Plays a role in cell wall biogenesis, but this effect may be indirect by affecting the activities of cell wall synthesis enzymes. Lipolysis of TAG by AYR1 is essential for starvation-induced autophagy. Forms an NADPH-regulated cation-selective channel in the mitochondrial outer membrane. This is NADPH-dependent 1-acyldihydroxyacetone phosphate reductase from Saccharomyces cerevisiae (strain ATCC 204508 / S288c) (Baker's yeast).